A 554-amino-acid polypeptide reads, in one-letter code: Valerianol synthase TPS1A (554 aa).

Positions 307 and 311 each coordinate Mg(2+). The DDXXD motif signature appears at 326-330 (VQRWD). Asp452, Ser456, and Glu460 together coordinate Mg(2+).

The protein belongs to the terpene synthase family. The cofactor is Mg(2+). As to expression, expressed in flowers.

It catalyses the reaction (2E,6E)-farnesyl diphosphate + H2O = valerianol + diphosphate. It functions in the pathway secondary metabolite biosynthesis; terpenoid biosynthesis. Terpene synthase that catalyzes the biosynthesis of the terpene valerianol, which is a volatile compound of floral scent. This Camellia hiemalis (Camellia) protein is Valerianol synthase TPS1A.